Here is a 385-residue protein sequence, read N- to C-terminus: Meiotic recombination protein SPO11-2 (385 aa).

Residues 24–169 (LPPAEVRARI…LGIMASSRGA (146 aa)) form the Topo IIA-type catalytic domain. Y126 acts as the O-(5'-phospho-DNA)-tyrosine intermediate in catalysis. Mg(2+) contacts are provided by E219 and D272.

It belongs to the TOP6A family. As to quaternary structure, interacts with TOP6B. Requires Mg(2+) as cofactor.

It is found in the nucleus. The catalysed reaction is ATP-dependent breakage, passage and rejoining of double-stranded DNA.. Its function is as follows. Required for meiotic recombination. Mediates DNA cleavage that forms the double-strand breaks (DSB) that initiate meiotic recombination. The protein is Meiotic recombination protein SPO11-2 (SPO11-2) of Oryza sativa subsp. japonica (Rice).